The chain runs to 543 residues: Chaperonin GroEL 4 (543 aa).

ATP-binding positions include 29–32, 86–90, Gly-411, 476–478, and Asp-492; these read TLGP, DGTTT, and DAA.

The protein belongs to the chaperonin (HSP60) family. In terms of assembly, forms a cylinder of 14 subunits composed of two heptameric rings stacked back-to-back. Interacts with the co-chaperonin GroES.

It is found in the cytoplasm. The catalysed reaction is ATP + H2O + a folded polypeptide = ADP + phosphate + an unfolded polypeptide.. Together with its co-chaperonin GroES, plays an essential role in assisting protein folding. The GroEL-GroES system forms a nano-cage that allows encapsulation of the non-native substrate proteins and provides a physical environment optimized to promote and accelerate protein folding. This chain is Chaperonin GroEL 4, found in Bradyrhizobium diazoefficiens (strain JCM 10833 / BCRC 13528 / IAM 13628 / NBRC 14792 / USDA 110).